The following is a 197-amino-acid chain: Xanthine phosphoribosyltransferase (197 aa).

The xanthine site is built by L20 and N27. 5-phospho-alpha-D-ribose 1-diphosphate is bound at residue 128-132; sequence ANGQA. Xanthine is bound at residue K156.

This sequence belongs to the purine/pyrimidine phosphoribosyltransferase family. Xpt subfamily. In terms of assembly, homodimer.

Its subcellular location is the cytoplasm. It catalyses the reaction XMP + diphosphate = xanthine + 5-phospho-alpha-D-ribose 1-diphosphate. Its pathway is purine metabolism; XMP biosynthesis via salvage pathway; XMP from xanthine: step 1/1. Its function is as follows. Converts the preformed base xanthine, a product of nucleic acid breakdown, to xanthosine 5'-monophosphate (XMP), so it can be reused for RNA or DNA synthesis. The chain is Xanthine phosphoribosyltransferase from Bacillus thuringiensis (strain Al Hakam).